The chain runs to 257 residues: Enolase-phosphatase E1 (257 aa).

Positions 16 and 18 each coordinate Mg(2+). Substrate is bound by residues 150-151 (SS) and Lys-184. Mg(2+) is bound at residue Asp-209.

It belongs to the HAD-like hydrolase superfamily. MasA/MtnC family. As to quaternary structure, monomer. It depends on Mg(2+) as a cofactor.

The protein localises to the cytoplasm. Its subcellular location is the nucleus. It catalyses the reaction 5-methylsulfanyl-2,3-dioxopentyl phosphate + H2O = 1,2-dihydroxy-5-(methylsulfanyl)pent-1-en-3-one + phosphate. The protein operates within amino-acid biosynthesis; L-methionine biosynthesis via salvage pathway; L-methionine from S-methyl-5-thio-alpha-D-ribose 1-phosphate: step 3/6. Its pathway is amino-acid biosynthesis; L-methionine biosynthesis via salvage pathway; L-methionine from S-methyl-5-thio-alpha-D-ribose 1-phosphate: step 4/6. In terms of biological role, bifunctional enzyme that catalyzes the enolization of 2,3-diketo-5-methylthiopentyl-1-phosphate (DK-MTP-1-P) into the intermediate 2-hydroxy-3-keto-5-methylthiopentenyl-1-phosphate (HK-MTPenyl-1-P), which is then dephosphorylated to form the acireductone 1,2-dihydroxy-3-keto-5-methylthiopentene (DHK-MTPene). The sequence is that of Enolase-phosphatase E1 (Enoph1) from Mus musculus (Mouse).